Reading from the N-terminus, the 190-residue chain is Adenylate kinase (190 aa).

11–16 (GAGKGT) provides a ligand contact to ATP. The tract at residues 31 to 60 (STGDIFRFNIKNETELGKLAKTFMDKGDLV) is NMP. AMP-binding positions include T32, R37, 58–60 (DLV), 86–89 (GFPR), and Q93. The LID stretch occupies residues 127–137 (ERGKTSGRVDD). Residue R128 coordinates ATP. R134 and R146 together coordinate AMP. ATP is bound at residue G174.

Belongs to the adenylate kinase family. In terms of assembly, monomer.

It localises to the cytoplasm. It catalyses the reaction AMP + ATP = 2 ADP. The protein operates within purine metabolism; AMP biosynthesis via salvage pathway; AMP from ADP: step 1/1. Catalyzes the reversible transfer of the terminal phosphate group between ATP and AMP. Plays an important role in cellular energy homeostasis and in adenine nucleotide metabolism. The sequence is that of Adenylate kinase from Flavobacterium psychrophilum (strain ATCC 49511 / DSM 21280 / CIP 103535 / JIP02/86).